The sequence spans 158 residues: Endoribonuclease YbeY (158 aa).

Residues His-120, His-124, and His-130 each coordinate Zn(2+).

This sequence belongs to the endoribonuclease YbeY family. It depends on Zn(2+) as a cofactor.

It is found in the cytoplasm. In terms of biological role, single strand-specific metallo-endoribonuclease involved in late-stage 70S ribosome quality control and in maturation of the 3' terminus of the 16S rRNA. This Spiroplasma citri protein is Endoribonuclease YbeY.